The chain runs to 541 residues: Glucose-6-phosphate isomerase (541 aa).

E346 serves as the catalytic Proton donor. Catalysis depends on residues H377 and K506.

Belongs to the GPI family.

It is found in the cytoplasm. It carries out the reaction alpha-D-glucose 6-phosphate = beta-D-fructose 6-phosphate. It functions in the pathway carbohydrate biosynthesis; gluconeogenesis. The protein operates within carbohydrate degradation; glycolysis; D-glyceraldehyde 3-phosphate and glycerone phosphate from D-glucose: step 2/4. Catalyzes the reversible isomerization of glucose-6-phosphate to fructose-6-phosphate. The polypeptide is Glucose-6-phosphate isomerase (Rhizobium meliloti (strain 1021) (Ensifer meliloti)).